Consider the following 326-residue polypeptide: Porphobilinogen deaminase (326 aa).

Cys251 is modified (S-(dipyrrolylmethanemethyl)cysteine).

The protein belongs to the HMBS family. Dipyrromethane serves as cofactor.

It catalyses the reaction 4 porphobilinogen + H2O = hydroxymethylbilane + 4 NH4(+). It functions in the pathway porphyrin-containing compound metabolism; protoporphyrin-IX biosynthesis; coproporphyrinogen-III from 5-aminolevulinate: step 2/4. Its function is as follows. Tetrapolymerization of the monopyrrole PBG into the hydroxymethylbilane pre-uroporphyrinogen in several discrete steps. The polypeptide is Porphobilinogen deaminase (HEM3) (Eremothecium gossypii (strain ATCC 10895 / CBS 109.51 / FGSC 9923 / NRRL Y-1056) (Yeast)).